Reading from the N-terminus, the 292-residue chain is Phosphatidylserine decarboxylase proenzyme (292 aa).

Residues aspartate 92, histidine 149, and serine 255 each act as charge relay system; for autoendoproteolytic cleavage activity in the active site. The active-site Schiff-base intermediate with substrate; via pyruvic acid; for decarboxylase activity is the serine 255. Serine 255 carries the post-translational modification Pyruvic acid (Ser); by autocatalysis.

It belongs to the phosphatidylserine decarboxylase family. PSD-B subfamily. Prokaryotic type I sub-subfamily. Heterodimer of a large membrane-associated beta subunit and a small pyruvoyl-containing alpha subunit. Requires pyruvate as cofactor. Is synthesized initially as an inactive proenzyme. Formation of the active enzyme involves a self-maturation process in which the active site pyruvoyl group is generated from an internal serine residue via an autocatalytic post-translational modification. Two non-identical subunits are generated from the proenzyme in this reaction, and the pyruvate is formed at the N-terminus of the alpha chain, which is derived from the carboxyl end of the proenzyme. The autoendoproteolytic cleavage occurs by a canonical serine protease mechanism, in which the side chain hydroxyl group of the serine supplies its oxygen atom to form the C-terminus of the beta chain, while the remainder of the serine residue undergoes an oxidative deamination to produce ammonia and the pyruvoyl prosthetic group on the alpha chain. During this reaction, the Ser that is part of the protease active site of the proenzyme becomes the pyruvoyl prosthetic group, which constitutes an essential element of the active site of the mature decarboxylase.

The protein localises to the cell membrane. The enzyme catalyses a 1,2-diacyl-sn-glycero-3-phospho-L-serine + H(+) = a 1,2-diacyl-sn-glycero-3-phosphoethanolamine + CO2. It functions in the pathway phospholipid metabolism; phosphatidylethanolamine biosynthesis; phosphatidylethanolamine from CDP-diacylglycerol: step 2/2. Catalyzes the formation of phosphatidylethanolamine (PtdEtn) from phosphatidylserine (PtdSer). The polypeptide is Phosphatidylserine decarboxylase proenzyme (Idiomarina loihiensis (strain ATCC BAA-735 / DSM 15497 / L2-TR)).